The sequence spans 159 residues: G-protein-signaling modulator 3 (159 aa).

The segment at 1 to 54 (MEAERPQEEDGEQSLPQDDQGWPPVNATARPWRSAPPSPPPPGTRHTALGPRSG) is disordered. 4 positions are modified to phosphoserine: Ser34, Ser38, Ser55, and Ser58. Pro residues predominate over residues 34–43 (SAPPSPPPPG). At Thr61 the chain carries Phosphothreonine. In terms of domain architecture, GoLoco 1 spans 61 to 83 (TELLLDLVAEAQSRRLEEQRATF). The disordered stretch occupies residues 77–97 (EEQRATFHTPEAPPNLAPAPP). Residues 87–97 (EAPPNLAPAPP) show a composition bias toward pro residues. GoLoco domains are found at residues 103-125 (KEQL…RSDP) and 131-154 (GQEL…RSRP).

The protein resides in the cytoplasm. Its function is as follows. Interacts with subunit of G(i) alpha proteins and regulates the activation of G(i) alpha proteins. The protein is G-protein-signaling modulator 3 (Gpsm3) of Mus musculus (Mouse).